The chain runs to 257 residues: MLAKRIIPCLDVRDGQVVKGVQFRNHEIIGDIVPLAKRYAEEGADELVFYDITASSDGRTVDKSWVERVAQVIDIPFCVAGGIKTIEDAEKLFAFGADKISINSPALADPNLITALADRFGVQAVVVGIDSWFEKETGKYWVNQYTGDEKRTRQTNWQLLDWVQEVQKRGAGEIVLNMMNQDGVRNGYDLTQLKLVREVCNVPLIASGGAGEMVHFRDAFTQANVDGALAASVFHKRIIEIGELKEYLYAEGVEIRR.

Catalysis depends on residues aspartate 11 and aspartate 130.

Belongs to the HisA/HisF family. As to quaternary structure, heterodimer of HisH and HisF.

The protein localises to the cytoplasm. It catalyses the reaction 5-[(5-phospho-1-deoxy-D-ribulos-1-ylimino)methylamino]-1-(5-phospho-beta-D-ribosyl)imidazole-4-carboxamide + L-glutamine = D-erythro-1-(imidazol-4-yl)glycerol 3-phosphate + 5-amino-1-(5-phospho-beta-D-ribosyl)imidazole-4-carboxamide + L-glutamate + H(+). Its pathway is amino-acid biosynthesis; L-histidine biosynthesis; L-histidine from 5-phospho-alpha-D-ribose 1-diphosphate: step 5/9. In terms of biological role, IGPS catalyzes the conversion of PRFAR and glutamine to IGP, AICAR and glutamate. The HisF subunit catalyzes the cyclization activity that produces IGP and AICAR from PRFAR using the ammonia provided by the HisH subunit. In Actinobacillus pleuropneumoniae serotype 7 (strain AP76), this protein is Imidazole glycerol phosphate synthase subunit HisF.